A 338-amino-acid chain; its full sequence is Protein RecA (338 aa).

Residue glycine 66–threonine 73 coordinates ATP.

This sequence belongs to the RecA family.

It is found in the cytoplasm. Functionally, can catalyze the hydrolysis of ATP in the presence of single-stranded DNA, the ATP-dependent uptake of single-stranded DNA by duplex DNA, and the ATP-dependent hybridization of homologous single-stranded DNAs. It interacts with LexA causing its activation and leading to its autocatalytic cleavage. The protein is Protein RecA of Geobacter sulfurreducens (strain ATCC 51573 / DSM 12127 / PCA).